A 72-amino-acid polypeptide reads, in one-letter code: Sec-independent protein translocase protein TatA (72 aa).

A helical transmembrane segment spans residues 1–21 (MLGGISIWQLLIVLAILVLIF).

It belongs to the TatA/E family. The Tat system comprises two distinct complexes: a TatABC complex, containing multiple copies of TatA, TatB and TatC subunits, and a separate TatA complex, containing only TatA subunits. Substrates initially bind to the TatABC complex, which probably triggers association of the separate TatA complex to form the active translocon.

The protein resides in the cell inner membrane. In terms of biological role, part of the twin-arginine translocation (Tat) system that transports large folded proteins containing a characteristic twin-arginine motif in their signal peptide across membranes. TatA could form the protein-conducting channel of the Tat system. In Marinomonas sp. (strain MWYL1), this protein is Sec-independent protein translocase protein TatA.